The sequence spans 175 residues: MIAKVVYPRYAVIRLRGIPTTPRDIAATLDLLRLRRKFTMTVVVGSPDVLGMIEKANDWITWGEIDANTLAEVLKRRGRLVGDRPLTLEHLQRWGWRSFEEVALAFVAGEIDRLSCGRKVPAREGQRAPCIPYLKPFFRLHPPRGGLNSLKLHFSVGGDLGYRGPLINDLIRRML.

Belongs to the universal ribosomal protein uL30 family. Part of the 50S ribosomal subunit.

This Pyrobaculum neutrophilum (strain DSM 2338 / JCM 9278 / NBRC 100436 / V24Sta) (Thermoproteus neutrophilus) protein is Large ribosomal subunit protein uL30.